The primary structure comprises 156 residues: Phosphopantetheine adenylyltransferase (156 aa).

Residue S9 participates in substrate binding. Residues 9–10 and H17 each bind ATP; that span reads SF. Residues K41, I74, and K88 each contribute to the substrate site. Residues 89-91, E99, and 123-129 each bind ATP; these read GLR and LLHVSSS.

It belongs to the bacterial CoaD family. In terms of assembly, homohexamer. The cofactor is Mg(2+).

It localises to the cytoplasm. It catalyses the reaction (R)-4'-phosphopantetheine + ATP + H(+) = 3'-dephospho-CoA + diphosphate. It participates in cofactor biosynthesis; coenzyme A biosynthesis; CoA from (R)-pantothenate: step 4/5. In terms of biological role, reversibly transfers an adenylyl group from ATP to 4'-phosphopantetheine, yielding dephospho-CoA (dPCoA) and pyrophosphate. The chain is Phosphopantetheine adenylyltransferase from Kocuria rhizophila (strain ATCC 9341 / DSM 348 / NBRC 103217 / DC2201).